Here is a 242-residue protein sequence, read N- to C-terminus: Large ribosomal subunit protein uL3 (242 aa).

Residue glutamine 151 is modified to N5-methylglutamine.

The protein belongs to the universal ribosomal protein uL3 family. In terms of assembly, part of the 50S ribosomal subunit. Forms a cluster with proteins L14 and L19. Post-translationally, methylated by PrmB.

Functionally, one of the primary rRNA binding proteins, it binds directly near the 3'-end of the 23S rRNA, where it nucleates assembly of the 50S subunit. The chain is Large ribosomal subunit protein uL3 from Zymomonas mobilis subsp. mobilis (strain ATCC 31821 / ZM4 / CP4).